Reading from the N-terminus, the 200-residue chain is ATP-dependent Clp protease proteolytic subunit (200 aa).

The Nucleophile role is filled by S102. The active site involves H127.

The protein belongs to the peptidase S14 family. In terms of assembly, fourteen ClpP subunits assemble into 2 heptameric rings which stack back to back to give a disk-like structure with a central cavity, resembling the structure of eukaryotic proteasomes.

The protein resides in the cytoplasm. It catalyses the reaction Hydrolysis of proteins to small peptides in the presence of ATP and magnesium. alpha-casein is the usual test substrate. In the absence of ATP, only oligopeptides shorter than five residues are hydrolyzed (such as succinyl-Leu-Tyr-|-NHMec, and Leu-Tyr-Leu-|-Tyr-Trp, in which cleavage of the -Tyr-|-Leu- and -Tyr-|-Trp bonds also occurs).. Functionally, cleaves peptides in various proteins in a process that requires ATP hydrolysis. Has a chymotrypsin-like activity. Plays a major role in the degradation of misfolded proteins. This Dehalococcoides mccartyi (strain ATCC BAA-2266 / KCTC 15142 / 195) (Dehalococcoides ethenogenes (strain 195)) protein is ATP-dependent Clp protease proteolytic subunit.